A 200-amino-acid chain; its full sequence is Kunitz type trypsin inhibitor 111 (200 aa).

A signal peptide spans 1–24 (MSTISFTIFILANVWLLVVTTSIA). Intrachain disulfides connect C62-C108, C160-C172, and C165-C168.

The protein belongs to the protease inhibitor I3 (leguminous Kunitz-type inhibitor) family. Interacts with SCP1.

Its subcellular location is the secreted. The protein localises to the extracellular space. It is found in the apoplast. The sequence is that of Kunitz type trypsin inhibitor 111 (KPI111) from Medicago truncatula (Barrel medic).